A 244-amino-acid polypeptide reads, in one-letter code: Serine acetyltransferase (244 aa).

Belongs to the transferase hexapeptide repeat family.

It localises to the cytoplasm. The catalysed reaction is L-serine + acetyl-CoA = O-acetyl-L-serine + CoA. It functions in the pathway amino-acid biosynthesis; L-cysteine biosynthesis; L-cysteine from L-serine: step 1/2. This Synechococcus elongatus (strain ATCC 33912 / PCC 7942 / FACHB-805) (Anacystis nidulans R2) protein is Serine acetyltransferase (cysE).